Here is a 702-residue protein sequence, read N- to C-terminus: Ribosomal RNA large subunit methyltransferase K/L (702 aa).

The region spanning 43–154 (LIYQSLMWSR…KETASIALDL (112 aa)) is the THUMP domain.

Belongs to the methyltransferase superfamily. RlmKL family.

The protein resides in the cytoplasm. It carries out the reaction guanosine(2445) in 23S rRNA + S-adenosyl-L-methionine = N(2)-methylguanosine(2445) in 23S rRNA + S-adenosyl-L-homocysteine + H(+). It catalyses the reaction guanosine(2069) in 23S rRNA + S-adenosyl-L-methionine = N(2)-methylguanosine(2069) in 23S rRNA + S-adenosyl-L-homocysteine + H(+). Specifically methylates the guanine in position 2445 (m2G2445) and the guanine in position 2069 (m7G2069) of 23S rRNA. The sequence is that of Ribosomal RNA large subunit methyltransferase K/L from Salmonella paratyphi B (strain ATCC BAA-1250 / SPB7).